The sequence spans 225 residues: Isoprenyl transferase 1 (225 aa).

The active site involves Asp-3. Asp-3 serves as a coordination point for Mg(2+). Substrate contacts are provided by residues 4–7 (GNRR), Trp-8, His-21, and 49–51 (SME). Asn-52 acts as the Proton acceptor in catalysis. Substrate is bound by residues Arg-55, Arg-174, and 180–182 (RLS). Residue Glu-193 coordinates Mg(2+).

Belongs to the UPP synthase family. Homodimer. Mg(2+) serves as cofactor.

Catalyzes the condensation of isopentenyl diphosphate (IPP) with allylic pyrophosphates generating different type of terpenoids. The protein is Isoprenyl transferase 1 of Corynebacterium glutamicum (strain ATCC 13032 / DSM 20300 / JCM 1318 / BCRC 11384 / CCUG 27702 / LMG 3730 / NBRC 12168 / NCIMB 10025 / NRRL B-2784 / 534).